A 186-amino-acid chain; its full sequence is Adenylate kinase (186 aa).

14–19 (GAGKGT) is an ATP binding site. The NMP stretch occupies residues 34–63 (STGDILRDHVARGTPLGERVRPIMERGDLV). Residues Thr-35, Arg-40, 61 to 63 (DLV), 84 to 87 (GFPR), and Gln-91 contribute to the AMP site. The segment at 125–135 (RRAELEGRSDD) is LID. Arg-126 serves as a coordination point for ATP. Residues Arg-132 and Arg-143 each coordinate AMP. An ATP-binding site is contributed by Gly-171.

It belongs to the adenylate kinase family. In terms of assembly, monomer.

Its subcellular location is the cytoplasm. It catalyses the reaction AMP + ATP = 2 ADP. It participates in purine metabolism; AMP biosynthesis via salvage pathway; AMP from ADP: step 1/1. Its function is as follows. Catalyzes the reversible transfer of the terminal phosphate group between ATP and AMP. Plays an important role in cellular energy homeostasis and in adenine nucleotide metabolism. This is Adenylate kinase from Thermus thermophilus (strain ATCC BAA-163 / DSM 7039 / HB27).